We begin with the raw amino-acid sequence, 369 residues long: DNA replication and repair protein RecF (369 aa).

ATP is bound at residue 30 to 37 (GQNAQGKT).

It belongs to the RecF family.

The protein localises to the cytoplasm. The RecF protein is involved in DNA metabolism; it is required for DNA replication and normal SOS inducibility. RecF binds preferentially to single-stranded, linear DNA. It also seems to bind ATP. In Acetivibrio thermocellus (strain ATCC 27405 / DSM 1237 / JCM 9322 / NBRC 103400 / NCIMB 10682 / NRRL B-4536 / VPI 7372) (Clostridium thermocellum), this protein is DNA replication and repair protein RecF.